A 427-amino-acid polypeptide reads, in one-letter code: 3-phosphoshikimate 1-carboxyvinyltransferase (427 aa).

Positions 22, 23, and 27 each coordinate 3-phosphoshikimate. Lysine 22 contacts phosphoenolpyruvate. Positions 96 and 124 each coordinate phosphoenolpyruvate. Serine 169, serine 170, glutamine 171, serine 197, aspartate 313, asparagine 336, and lysine 340 together coordinate 3-phosphoshikimate. Residue glutamine 171 coordinates phosphoenolpyruvate. Aspartate 313 serves as the catalytic Proton acceptor. Phosphoenolpyruvate-binding residues include arginine 344, arginine 386, and lysine 411.

The protein belongs to the EPSP synthase family. Monomer.

It localises to the cytoplasm. It carries out the reaction 3-phosphoshikimate + phosphoenolpyruvate = 5-O-(1-carboxyvinyl)-3-phosphoshikimate + phosphate. It participates in metabolic intermediate biosynthesis; chorismate biosynthesis; chorismate from D-erythrose 4-phosphate and phosphoenolpyruvate: step 6/7. In terms of biological role, catalyzes the transfer of the enolpyruvyl moiety of phosphoenolpyruvate (PEP) to the 5-hydroxyl of shikimate-3-phosphate (S3P) to produce enolpyruvyl shikimate-3-phosphate and inorganic phosphate. The protein is 3-phosphoshikimate 1-carboxyvinyltransferase of Salmonella heidelberg (strain SL476).